A 357-amino-acid chain; its full sequence is (4E)-oxalomesaconate Delta-isomerase (357 aa).

Belongs to the PrpF family.

The enzyme catalyses (1E)-4-oxobut-1-ene-1,2,4-tricarboxylate = (3Z)-2-oxo-4-carboxy-3-hexenedioate. Its pathway is secondary metabolite metabolism; lignin degradation. Its function is as follows. Contributes to the degradation of lignin at the level of the protocatechuate 4,5-cleavage pathway. Catalyzes the isomerization of the double bond between C4 and C5 in (4E)-oxalomesaconate (OMA) to (3Z)-2-keto-4-carboxy-3-hexenedioate (KCH), where the double bond has migrated between C3 and C4 via a 1,3-allylic isomerization. The protein is (4E)-oxalomesaconate Delta-isomerase of Novosphingobium sp. (strain KA1) (Sphingomonas sp. (strain KA1)).